A 264-amino-acid polypeptide reads, in one-letter code: MKPYLDLMRHVLEHGTRKDDRTGTGTLSVFGWQTRYDLAAGFPLVTTKKCHLRSIVHELLWFLQGDTNIRYLKENGVSIWDEWADENGDLGPVYGHQWRSWPKADGGVIDQIAEAVKTLRTNPDSRRIIVSAWNVADLDRMALAPCHAFFQFYVAEGRLSCQLYQRSADIFLGVPFNIASYALLTLMMAQVTGLKPGDFVHTLGDAHLYVNHLEQAREQLSREPRPLPTMTLNPDVTDIFGFRFEDFTLGGYDPHPAIKAPVAV.

Position 21 (arginine 21) interacts with dUMP. Histidine 51 lines the (6R)-5,10-methylene-5,6,7,8-tetrahydrofolate pocket. 126–127 (RR) is a binding site for dUMP. Cysteine 146 acts as the Nucleophile in catalysis. Residues 166 to 169 (RSAD), asparagine 177, and 207 to 209 (HLY) each bind dUMP. Aspartate 169 provides a ligand contact to (6R)-5,10-methylene-5,6,7,8-tetrahydrofolate. Alanine 263 is a binding site for (6R)-5,10-methylene-5,6,7,8-tetrahydrofolate.

Belongs to the thymidylate synthase family. Bacterial-type ThyA subfamily. Homodimer.

Its subcellular location is the cytoplasm. It catalyses the reaction dUMP + (6R)-5,10-methylene-5,6,7,8-tetrahydrofolate = 7,8-dihydrofolate + dTMP. Its pathway is pyrimidine metabolism; dTTP biosynthesis. Its function is as follows. Catalyzes the reductive methylation of 2'-deoxyuridine-5'-monophosphate (dUMP) to 2'-deoxythymidine-5'-monophosphate (dTMP) while utilizing 5,10-methylenetetrahydrofolate (mTHF) as the methyl donor and reductant in the reaction, yielding dihydrofolate (DHF) as a by-product. This enzymatic reaction provides an intracellular de novo source of dTMP, an essential precursor for DNA biosynthesis. The sequence is that of Thymidylate synthase from Thiobacillus denitrificans (strain ATCC 25259 / T1).